The sequence spans 83 residues: Small ribosomal subunit protein bS16 (83 aa).

Belongs to the bacterial ribosomal protein bS16 family.

This is Small ribosomal subunit protein bS16 from Thermosynechococcus vestitus (strain NIES-2133 / IAM M-273 / BP-1).